The sequence spans 145 residues: Transcription antitermination protein NusB (145 aa).

It belongs to the NusB family.

Functionally, involved in transcription antitermination. Required for transcription of ribosomal RNA (rRNA) genes. Binds specifically to the boxA antiterminator sequence of the ribosomal RNA (rrn) operons. The polypeptide is Transcription antitermination protein NusB (Burkholderia mallei (strain NCTC 10247)).